We begin with the raw amino-acid sequence, 69 residues long: Sec-independent protein translocase protein TatA (69 aa).

A helical transmembrane segment spans residues 1-21 (MFGLGGQELILILMIILLLFG). The interval 49-69 (EFNKAMDDETPKKKDFGPDRE) is disordered.

This sequence belongs to the TatA/E family. Forms a complex with TatC.

The protein resides in the cell inner membrane. In terms of biological role, part of the twin-arginine translocation (Tat) system that transports large folded proteins containing a characteristic twin-arginine motif in their signal peptide across membranes. TatA could form the protein-conducting channel of the Tat system. This Chlorobium luteolum (strain DSM 273 / BCRC 81028 / 2530) (Pelodictyon luteolum) protein is Sec-independent protein translocase protein TatA.